We begin with the raw amino-acid sequence, 140 residues long: Cysteine desulfuration protein SufE (140 aa).

Catalysis depends on Cys51, which acts as the Cysteine persulfide intermediate.

This sequence belongs to the SufE family. As to quaternary structure, homodimer. Interacts with SufS.

It is found in the cytoplasm. It participates in cofactor biosynthesis; iron-sulfur cluster biosynthesis. Participates in cysteine desulfuration mediated by SufS. Cysteine desulfuration mobilizes sulfur from L-cysteine to yield L-alanine and constitutes an essential step in sulfur metabolism for biosynthesis of a variety of sulfur-containing biomolecules. Functions as a sulfur acceptor for SufS, by mediating the direct transfer of the sulfur atom from the S-sulfanylcysteine of SufS, an intermediate product of cysteine desulfuration process. This Yersinia enterocolitica serotype O:8 / biotype 1B (strain NCTC 13174 / 8081) protein is Cysteine desulfuration protein SufE.